The primary structure comprises 153 residues: Large ribosomal subunit protein uL23m (153 aa).

The segment at 131–153 (MADEQQRQGSDPQRGGVPNWFSL) is disordered.

This sequence belongs to the universal ribosomal protein uL23 family. Component of the mitochondrial ribosome large subunit (39S) which comprises a 16S rRNA and about 50 distinct proteins.

It localises to the mitochondrion. The sequence is that of Large ribosomal subunit protein uL23m (MRPL23) from Otolemur garnettii (Small-eared galago).